Here is a 463-residue protein sequence, read N- to C-terminus: ATP-dependent protease ATPase subunit HslU (463 aa).

ATP-binding positions include I19, 61 to 66 (GVGKTE), D277, E341, and R413.

This sequence belongs to the ClpX chaperone family. HslU subfamily. A double ring-shaped homohexamer of HslV is capped on each side by a ring-shaped HslU homohexamer. The assembly of the HslU/HslV complex is dependent on binding of ATP.

The protein resides in the cytoplasm. Functionally, ATPase subunit of a proteasome-like degradation complex; this subunit has chaperone activity. The binding of ATP and its subsequent hydrolysis by HslU are essential for unfolding of protein substrates subsequently hydrolyzed by HslV. HslU recognizes the N-terminal part of its protein substrates and unfolds these before they are guided to HslV for hydrolysis. The protein is ATP-dependent protease ATPase subunit HslU of Bacillus cereus (strain 03BB102).